The primary structure comprises 707 residues: Dendrin (707 aa).

5 disordered regions span residues 1-22 (MLDGPLFSEGPDSPRELQDEES), 67-86 (QNRTCRLRPGSPEPPPRRPW), 94-195 (ATNW…PWGG), 213-273 (AGTA…KKRL), and 342-377 (TEVALSGSTISSPPRPVPRSRQHLRGSRKGKEGSEE). Residues 103–134 (AEVRAREQEKRKAASQEREAKETERKRRKAGG) adopt a coiled-coil conformation. A compositionally biased stretch (basic and acidic residues) spans 105–127 (VRAREQEKRKAASQEREAKETER). The nuclear localization stretch occupies residues 113–131 (RKAASQEREAKETERKRRK). An interaction with MAGI2 region spans residues 186–236 (GVAWAGPWGGRRPGPPSYEAHLLLRGAAGTAPRRRWDRPPPYVAPPSYEGP). The segment at 340–434 (PVTEVALSGS…LEVWKVTRRA (95 aa)) is interaction with ACTN1. A compositionally biased stretch (basic residues) spans 359 to 369 (PRSRQHLRGSR). Phosphoserine is present on Ser-387. 2 disordered regions span residues 389–421 (KKPPVRHSQTLPRPWAPGGTGWKESLGQREGTE) and 517–707 (RVLN…GKRE). Positions 406 to 707 (GGTGWKESLG…TRKTPQGKRE (302 aa)) are interaction with CD2AP and NPHS1. Composition is skewed to basic and acidic residues over residues 524 to 544 (EGREFEAEGRQQGDSSLEERS) and 692 to 707 (GLVREDTRKTPQGKRE).

Forms a ternary complex with MAGI2 and SH3KBP1; recruits DDN to the cytoplasm. Interacts with MAGI1. Interacts with ACTN1 and may interact with WWC1. Interacts with the podocyte slit diaphragm proteins CD2AP, NPHS1 and NPHS2; the interaction with CD2AP and NPHS1 is direct. Specifically expressed in forebrain structures, particularly in neocortex, olfactory bulb, hippocampus, caudate-putamen, and limbic system (at protein level). Also detected in spleen, liver, kidney and placenta (at protein level).

The protein resides in the cell projection. It is found in the dendritic spine membrane. It localises to the cytoplasm. Its subcellular location is the endoplasmic reticulum membrane. The protein localises to the perikaryon. The protein resides in the nucleus. In terms of biological role, promotes apoptosis of kidney glomerular podocytes. Podocytes are highly specialized cells essential to the ultrafiltration of blood, resulting in the extraction of urine and the retention of protein. This Rattus norvegicus (Rat) protein is Dendrin (Ddn).